A 309-amino-acid chain; its full sequence is NAD kinase (309 aa).

Catalysis depends on aspartate 89, which acts as the Proton acceptor. Residues 89 to 90, 163 to 164, histidine 174, arginine 191, aspartate 193, and 204 to 209 each bind NAD(+); these read DG, NE, and TAYSLS.

The protein belongs to the NAD kinase family. A divalent metal cation serves as cofactor.

Its subcellular location is the cytoplasm. It catalyses the reaction NAD(+) + ATP = ADP + NADP(+) + H(+). Involved in the regulation of the intracellular balance of NAD and NADP, and is a key enzyme in the biosynthesis of NADP. Catalyzes specifically the phosphorylation on 2'-hydroxyl of the adenosine moiety of NAD to yield NADP. This is NAD kinase from Shewanella piezotolerans (strain WP3 / JCM 13877).